Here is a 402-residue protein sequence, read N- to C-terminus: Tryptophan synthase beta chain 2 (402 aa).

Residue Lys-97 is modified to N6-(pyridoxal phosphate)lysine.

Belongs to the TrpB family. As to quaternary structure, tetramer of two alpha and two beta chains. It depends on pyridoxal 5'-phosphate as a cofactor.

The catalysed reaction is (1S,2R)-1-C-(indol-3-yl)glycerol 3-phosphate + L-serine = D-glyceraldehyde 3-phosphate + L-tryptophan + H2O. It participates in amino-acid biosynthesis; L-tryptophan biosynthesis; L-tryptophan from chorismate: step 5/5. In terms of biological role, the beta subunit is responsible for the synthesis of L-tryptophan from indole and L-serine. This is Tryptophan synthase beta chain 2 (trpB2) from Wolinella succinogenes (strain ATCC 29543 / DSM 1740 / CCUG 13145 / JCM 31913 / LMG 7466 / NCTC 11488 / FDC 602W) (Vibrio succinogenes).